We begin with the raw amino-acid sequence, 469 residues long: MTIHQSPEAFGYDAFLRQHQNKEVLRFITCGSVDDGKSTLIGRLLHDTKQIFDDQVTALQRDSRKHGTQGGEVDLALLVDGLQAEREQGITIDVAYRFFSTDRRSFIVADTPGHEQYTRNMATGASTADLAVILVDARHGLTRQSRRHALLVSLLGIRRVALAINKMDLVGWSQDKFEAIVSGFQAFAAPLNFTEVRAIPLSAKNGDNVVLPGTAATWYTDVPLLRYLEEVPVKSEERAAAFRMPVQWVNRPNSDFRGFSGLIASGSVAPGDAVTVAPSGKTSTIARIFTADGDLERASEGQSVTLVLADEVDASRGAVIATSDAPLTLTDSLDVRLFWAAESDLVPGANLWAKVGTQTVNAVVKAVHRRIDPETGQAGPADKLAVNDIGDVTLTLDRQIAVDPYAENRDTGSLILIDRETTDTAALGLVQRVVASSKVAPAPTASVTASAEPARSGGLLAGLKRLFGG.

The tr-type G domain occupies 22–237 (KEVLRFITCG…LEEVPVKSEE (216 aa)). Residues 31 to 38 (GSVDDGKS) are G1. Residue 31 to 38 (GSVDDGKS) coordinates GTP. Residues 89-93 (GITID) form a G2 region. The interval 110-113 (DTPG) is G3. Residues 110–114 (DTPGH) and 165–168 (NKMD) contribute to the GTP site. Residues 165 to 168 (NKMD) form a G4 region. The tract at residues 202 to 204 (SAK) is G5.

The protein belongs to the TRAFAC class translation factor GTPase superfamily. Classic translation factor GTPase family. CysN/NodQ subfamily. As to quaternary structure, heterodimer composed of CysD, the smaller subunit, and CysN.

It catalyses the reaction sulfate + ATP + H(+) = adenosine 5'-phosphosulfate + diphosphate. The protein operates within sulfur metabolism; hydrogen sulfide biosynthesis; sulfite from sulfate: step 1/3. With CysD forms the ATP sulfurylase (ATPS) that catalyzes the adenylation of sulfate producing adenosine 5'-phosphosulfate (APS) and diphosphate, the first enzymatic step in sulfur assimilation pathway. APS synthesis involves the formation of a high-energy phosphoric-sulfuric acid anhydride bond driven by GTP hydrolysis by CysN coupled to ATP hydrolysis by CysD. The protein is Sulfate adenylyltransferase subunit 1 of Methylorubrum extorquens (strain PA1) (Methylobacterium extorquens).